We begin with the raw amino-acid sequence, 2188 residues long: MRALGGITLLLAVAICQGYETYQRSSFRSSSSSSYGGGQTVPQLNSFASAHFNEVRELANQLKQKFNVLSQGSTNFAYTSPWSASILDLSGKSTLQLDQLSSEISRQLVQDMREGITNYHTIAQPNFFEAKAAELLERYSGAESASLQQTVGLGPYQPVDLSGFDEVKNYAYPAEVKVIDGKTYVVHRNCTEATKLSDYGSSGQLNSGFLGHQQTSLPLSSTTTTITRKKTIHDWVRENMEPSVVGYNSVVKLDGQLRNSALNQMVPLSPGSNVVIHRFNKTITTNPDGTSSVGGSEWQQRWQDGKLVYDHQQPFGQSTIPRDEQWKREERERLFWYLTTPQRLDDWQQQQEERLLGVVQRYQVSLPVLKEFHRRELARYEALLGQYQSRVQDTSSWQRQERGRLDWLIHQNGFTVQDIERWQNENARKLAEAARQHGISQNQLQQFQREELQRLYVHFNQVNESLAPQVPSVPQTTYNYQSSSSLTEDNTKEQQRLEELIRQHNATIAALQNSIKTDQQRLKNLSIKYQGDMQSQTQWLRGEVARIGDLIKEQNEQVSKITAWQSSERSRLENILLQHRGSVEEVQQRINMDRNYLQNLATKYQVSVEELEKWQKEELERLQVRGQQQLEEHIKDWQISVSSNLRDIATQNKLTIDEFQNYIINDRSHLEEMARLYKVKVEEIEQWIKSELKKFQSEGLLKGVEQELIQWQQKERERLQAIVQQNSLTVEQLEVRIKNDQDHFFKLADKYKINVEDIQDWLKKELLRLQSEGLVKAETLKEWQQQERAQISLLVQQNKYSLDEFERKMLADRARLQELSNTYNVKVSEIEQWIKSEGDRLQHEGQLRMESQLNNWQKIERQRLLDLINKNNLSIEEIESKISKDQTHLYSLAQQHQVRVEEIEQWIRQQIQKLQDQGLIEMQKLKNWQLEWRGNLTNMVQDRDFTVEEFHKWLLKDREQLQSLAMQHNVQIEEIEQFVKKEEQRFIGMGLLKPSEKLTNWQEVERLHLKNLAQQQYKSTEQLEARLRQDRELLERLARQYSVQVEEIESWMKQELARMRDEGQLQIDNLTSWQLAERERLEALIKQNKQWSAEELRAELEKDREHMQTMAFQYHTSVEEIEKWLQSEIERLKQQGKLNIEQLTAWQRTEQQRILSLLQQHSNITLEQFQAKVHNDRRFLMNLAEQHHVHIEEVDNYVKQVIEDLRKNGQFEIEQLQTWQRVERDYIKSLISEYKNSLSTAEYEEKLLADRAHLKHLADQYRINVEQIEEWMIAELKRLRGSTEETLKSLSAWQVSELERLQNLVKQQNHLTFVEFEMELNQERDRLQKLANQYSVNVVEIEEWLRQQLINLRTTGQAKVENLSKWQVEEQQRLIEMLLKKQQEMPYEQVERELTQDHARLQSLSQTHHVDIDHVDHWLREELRRLQSSGLVQIEQQTQWQQKISNGFNNWLEQQRNGASYQDFVDFLKRDKQRMDGIATDYHVTVEQVEKWVQKEAARLSLIGVIERPENNLKYEDISNIWVGDQTDSWKNELVTRLRSVTRQRPFTRQEFESYLIRNKPIFEQIARQYHVTIEDIHLWLDQSAKNEGLVTTEWQAKERLHIDNLINQQLRKQQRWTIEELELRLNNDQKHLQDAVAQYHVTVEELKVWYKDELNRLLEQRRIDRGSGISWQNIESQRIYLAIVNNPGISRQALENRLFRDVHVRASQYQITVEELRQFILSQLRRFSDMGLIVDNGRQANNWHDQERKRLREVVKGVVITEQELLDFISQDTSFQTQLAQSYQVGLEQLAPVQRIFIGNLAREQLLEQRRLNHLTTWQQRERDRLYEFIGNQNMTQTELKTWQIQDSKLLAEFAKRYEISVQQLSDWQKKELARINQLARYYGMSQSDLQQFREGELRQLAYINHRQLLSAAEAQKWEKRHQWTLSRLQSRYGKFGQELVAWRRTLYLLSQGLIDLPADSGSNGGYVVDAGSTNATAVYKPIFSKDRGDQPPHTYDESFVEGDEPGLEGETARPRPPNPAPIVSTPKPPLPYSRGGPSGGFEYRRQDYTFNVPVGSASASASGGPTGSSASASASLGKWNRASGDEPLQQEVDLGQQQQIEELGWNEKLEDLGQQTQVEDTDWNQQAEDLGQQQQVQVEDDLHFDQTQGHSSSSNSRSQPLQQATKVEVEATSEPSFWEKLKEKLG.

Positions 1 to 18 (MRALGGITLLLAVAICQG) are cleaved as a signal peptide. Coiled-coil stretches lie at residues 570 to 635 (SRLE…EHIK), 1009 to 1050 (LKNL…EIES), 1312 to 1343 (TFVEFEMELNQERDRLQKLANQYSVNVVEIEE), and 1613 to 1641 (KQQRWTIEELELRLNNDQKHLQDAVAQYH). The disordered stretch occupies residues 1984–2188 (IFSKDRGDQP…FWEKLKEKLG (205 aa)). Residues 1985–1998 (FSKDRGDQPPHTYD) show a composition bias toward basic and acidic residues. Residues 1989–1991 (RGD) carry the Cell attachment site motif. A compositionally biased stretch (acidic residues) spans 2000–2009 (SFVEGDEPGL). The segment covering 2016 to 2033 (PRPPNPAPIVSTPKPPLP) has biased composition (pro residues). Composition is skewed to low complexity over residues 2057–2077 (GSASASASGGPTGSSASASAS) and 2091–2101 (QQEVDLGQQQQ). Positions 2115 to 2139 (GQQTQVEDTDWNQQAEDLGQQQQVQ) are enriched in polar residues. Over residues 2148–2165 (QTQGHSSSSNSRSQPLQQ) the composition is skewed to low complexity. Basic and acidic residues predominate over residues 2179-2188 (FWEKLKEKLG).

O-glycosylation by pgant3 is required for proper secretion and localization to the basal cell layer interface during wing development. In embryos, expressed in the apodemes (muscle attachment sites) of the major longitudinal muscles 4, 6, 7, 12 and 13 and the wide dorsal oblique muscles 9 and 10, in hemocytes, in fat body cells, in basement membranes surrounding the gut and in the commissures of the ventral nerve cord. Expressed in larval imaginal wing disk and in pupal wing. In adult flies, expressed in the jump muscle (at protein level).

The protein resides in the secreted. The protein localises to the extracellular space. It is found in the extracellular matrix. Functionally, functions as a ligand for integrin alpha-PS2/beta-PS. Required in larvae for proper muscle structure and function. Involved in the regulation of cell adhesion during wing development. In Drosophila melanogaster (Fruit fly), this protein is Tiggrin.